Here is a 1040-residue protein sequence, read N- to C-terminus: Multidrug resistance protein MdtB (1040 aa).

12 helical membrane-spanning segments follow: residues 25 to 45, 347 to 367, 369 to 389, 396 to 416, 440 to 460, 472 to 492, 537 to 557, 863 to 883, 888 to 908, 910 to 930, 968 to 988, and 998 to 1018; these read LLMA…PVAA, LMLA…NIPA, IIPG…MVFL, LTLM…IVVI, IGFT…PLLF, FAVT…TLTP, WLTL…WIVI, LGST…VLGV, FIHP…ALLA, IIAG…LIGI, ILMT…STGV, and IAMV…TPVI.

This sequence belongs to the resistance-nodulation-cell division (RND) (TC 2.A.6) family. MdtB subfamily. Part of a tripartite efflux system composed of MdtA, MdtB and MdtC. MdtB forms a heteromultimer with MdtC.

The protein resides in the cell inner membrane. This Salmonella paratyphi A (strain ATCC 9150 / SARB42) protein is Multidrug resistance protein MdtB.